The following is a 333-amino-acid chain: Bacteriocin helveticin-J (333 aa).

This heat-sensitive bacteriocin inhibits the growth of closely related Lactobacillus species. This Lactobacillus helveticus (Lactobacillus suntoryeus) protein is Bacteriocin helveticin-J (hlv).